Consider the following 688-residue polypeptide: Glycine--tRNA ligase beta subunit (688 aa).

Belongs to the class-II aminoacyl-tRNA synthetase family. Tetramer of two alpha and two beta subunits.

It is found in the cytoplasm. It carries out the reaction tRNA(Gly) + glycine + ATP = glycyl-tRNA(Gly) + AMP + diphosphate. In Aliivibrio fischeri (strain ATCC 700601 / ES114) (Vibrio fischeri), this protein is Glycine--tRNA ligase beta subunit.